We begin with the raw amino-acid sequence, 299 residues long: ATP phosphoribosyltransferase (299 aa).

This sequence belongs to the ATP phosphoribosyltransferase family. Long subfamily. Mg(2+) serves as cofactor.

It is found in the cytoplasm. It carries out the reaction 1-(5-phospho-beta-D-ribosyl)-ATP + diphosphate = 5-phospho-alpha-D-ribose 1-diphosphate + ATP. The protein operates within amino-acid biosynthesis; L-histidine biosynthesis; L-histidine from 5-phospho-alpha-D-ribose 1-diphosphate: step 1/9. Its activity is regulated as follows. Feedback inhibited by histidine. In terms of biological role, catalyzes the condensation of ATP and 5-phosphoribose 1-diphosphate to form N'-(5'-phosphoribosyl)-ATP (PR-ATP). Has a crucial role in the pathway because the rate of histidine biosynthesis seems to be controlled primarily by regulation of HisG enzymatic activity. This is ATP phosphoribosyltransferase from Shewanella sp. (strain MR-7).